We begin with the raw amino-acid sequence, 319 residues long: Probable NAD(P)H-dependent D-xylose reductase xyl1 (319 aa).

Catalysis depends on Tyr50, which acts as the Proton donor. Position 112 (His112) interacts with substrate. NAD(+) contacts are provided by residues 166 to 167, 215 to 224, and 271 to 281; these read SN, SSFGPLSFLE, and KSNNPTRLSQN.

This sequence belongs to the aldo/keto reductase family.

The catalysed reaction is xylitol + NAD(+) = D-xylose + NADH + H(+). The enzyme catalyses xylitol + NADP(+) = D-xylose + NADPH + H(+). It functions in the pathway carbohydrate metabolism; D-xylose degradation. Functionally, catalyzes the initial reaction in the xylose utilization pathway by reducing D-xylose into xylitol. Xylose is a major component of hemicelluloses such as xylan. Most fungi utilize D-xylose via three enzymatic reactions, xylose reductase (XR), xylitol dehydrogenase (XDH), and xylulokinase, to form xylulose 5-phosphate, which enters pentose phosphate pathway. The polypeptide is Probable NAD(P)H-dependent D-xylose reductase xyl1 (xyl1) (Aspergillus oryzae (strain ATCC 42149 / RIB 40) (Yellow koji mold)).